Consider the following 275-residue polypeptide: 4-diphosphocytidyl-2-C-methyl-D-erythritol kinase (275 aa).

Lysine 8 is an active-site residue. ATP is bound at residue proline 86–serine 96. Residue aspartate 125 is part of the active site.

It belongs to the GHMP kinase family. IspE subfamily.

The catalysed reaction is 4-CDP-2-C-methyl-D-erythritol + ATP = 4-CDP-2-C-methyl-D-erythritol 2-phosphate + ADP + H(+). The protein operates within isoprenoid biosynthesis; isopentenyl diphosphate biosynthesis via DXP pathway; isopentenyl diphosphate from 1-deoxy-D-xylulose 5-phosphate: step 3/6. Functionally, catalyzes the phosphorylation of the position 2 hydroxy group of 4-diphosphocytidyl-2C-methyl-D-erythritol. In Thermus thermophilus (strain ATCC BAA-163 / DSM 7039 / HB27), this protein is 4-diphosphocytidyl-2-C-methyl-D-erythritol kinase.